We begin with the raw amino-acid sequence, 431 residues long: uncharacterized protein (431 aa).

Disordered regions lie at residues 1 to 37 and 102 to 132; these read MFWR…KLTP and PPPL…RRVA. Basic and acidic residues predominate over residues 22–32; that stretch reads GDFRRSSDPRL. The span at 106-121 shows a compositional bias: low complexity; sequence LSAGASRESAPRQPGP. Basic and acidic residues predominate over residues 122-132; that stretch reads GERERPRRRVA.

The protein resides in the cytoplasm. This is an uncharacterized protein from Homo sapiens (Human).